The chain runs to 367 residues: Aminomethyltransferase (367 aa).

The protein belongs to the GcvT family. As to quaternary structure, the glycine cleavage system is composed of four proteins: P, T, L and H.

The catalysed reaction is N(6)-[(R)-S(8)-aminomethyldihydrolipoyl]-L-lysyl-[protein] + (6S)-5,6,7,8-tetrahydrofolate = N(6)-[(R)-dihydrolipoyl]-L-lysyl-[protein] + (6R)-5,10-methylene-5,6,7,8-tetrahydrofolate + NH4(+). Its function is as follows. The glycine cleavage system catalyzes the degradation of glycine. The protein is Aminomethyltransferase of Mycobacterium avium (strain 104).